We begin with the raw amino-acid sequence, 400 residues long: Probable splicing factor YJU2B (400 aa).

The segment at 1-26 (MGERKGVNKYYPPDFNPEKHGSLNRY) is disordered. Ser40 bears the Phosphoserine mark. A coiled-coil region spans residues 182 to 214 (LNSMLRKRFREKKKAMQEEEERDQALQAKASLA). Positions 255–400 (WFPSTPGASA…VADYSGSESE (146 aa)) are disordered. Positions 283–292 (RRATPTSSPV) are enriched in polar residues. Ser310 bears the Phosphoserine mark. A compositionally biased stretch (polar residues) spans 327 to 341 (EGTNQNRPVSPQDCS). Residues 364–380 (PQPPPDTSPEAPNPQDT) show a composition bias toward pro residues.

It belongs to the CWC16 family.

It is found in the nucleus. In terms of biological role, may be involved in mRNA splicing. This chain is Probable splicing factor YJU2B (YJU2B), found in Bos taurus (Bovine).